Consider the following 402-residue polypeptide: Heat stress transcription factor A-6a (402 aa).

Residues 1 to 28 form a disordered region; that stretch reads MLKPQTPRARRAAHPNSHMASSSSSSSL. A coiled-coil region spans residues 212–258; that stretch reads EVVSLKRDRAALRAEVIMLKQQYNACKSQLIAMEEMVRNIERRQQQT. The tract at residues 216-266 is hydrophobic repeat HR-A/B; that stretch reads LKRDRAALRAEVIMLKQQYNACKSQLIAMEEMVRNIERRQQQTIGFFAKVL. The short motif at 290 to 293 is the Nuclear localization signal element; that stretch reads KRQR. An AHA motif is present at residues 349–358; it reads DDVWEELDAL.

It belongs to the HSF family. Class A subfamily. In terms of assembly, homotrimer. In terms of processing, exhibits temperature-dependent phosphorylation.

It localises to the nucleus. In terms of biological role, transcriptional regulator that specifically binds DNA of heat shock promoter elements (HSE). The polypeptide is Heat stress transcription factor A-6a (HSFA6B) (Oryza sativa subsp. japonica (Rice)).